The primary structure comprises 395 residues: Flap endonuclease 1 (395 aa).

An N-domain region spans residues 1 to 108 (MGILGLSKLL…DELETRRQKA (108 aa)). D34 lines the Mg(2+) pocket. Residue R74 coordinates DNA. Mg(2+)-binding residues include D90, E162, E164, D183, and D185. Residues 126 to 257 (MMEKMSKRTV…QRAWEGIQRY (132 aa)) form an I-domain region. E162 contacts DNA. DNA is bound by residues G235 and D237. D237 serves as a coordination point for Mg(2+). Positions 340-348 (TQGRLDNFF) are interaction with PCNA.

Belongs to the XPG/RAD2 endonuclease family. FEN1 subfamily. Interacts with PCNA. Three molecules of FEN1 bind to one PCNA trimer with each molecule binding to one PCNA monomer. PCNA stimulates the nuclease activity without altering cleavage specificity. Requires Mg(2+) as cofactor. In terms of processing, phosphorylated. Phosphorylation upon DNA damage induces relocalization to the nuclear plasma.

Its subcellular location is the nucleus. It is found in the nucleolus. The protein resides in the nucleoplasm. It localises to the mitochondrion. In terms of biological role, structure-specific nuclease with 5'-flap endonuclease and 5'-3' exonuclease activities involved in DNA replication and repair. During DNA replication, cleaves the 5'-overhanging flap structure that is generated by displacement synthesis when DNA polymerase encounters the 5'-end of a downstream Okazaki fragment. It enters the flap from the 5'-end and then tracks to cleave the flap base, leaving a nick for ligation. Also involved in the long patch base excision repair (LP-BER) pathway, by cleaving within the apurinic/apyrimidinic (AP) site-terminated flap. Acts as a genome stabilization factor that prevents flaps from equilibrating into structures that lead to duplications and deletions. Also possesses 5'-3' exonuclease activity on nicked or gapped double-stranded DNA, and exhibits RNase H activity. Also involved in replication and repair of rDNA and in repairing mitochondrial DNA. The protein is Flap endonuclease 1 of Leishmania braziliensis.